A 732-amino-acid polypeptide reads, in one-letter code: Calcineurin-interacting protein 2 (732 aa).

Disordered regions lie at residues 1 to 24 (MNRG…REPY), 115 to 169 (DYEP…ALPK), 181 to 232 (QKKD…LDDR), 310 to 351 (ILSR…TSRR), 372 to 397 (RSQS…STVS), and 426 to 708 (QTVT…PLEE). Positions 8 to 17 (YNRSRSTSSR) are enriched in polar residues. Over residues 117-129 (EPLRKEPELKEQK) the composition is skewed to basic and acidic residues. Polar residues-rich tracts occupy residues 151 to 163 (SGIT…SSRT) and 189 to 208 (IPRQ…NNEL). The span at 312-323 (SRSVSTSPSSVT) shows a compositional bias: low complexity. Residues 324 to 351 (DNIPKTSTSRIPSSENPKTMEHTTTSRR) are compositionally biased toward polar residues. The segment covering 426–439 (QTVTNVRVPSSRGS) has biased composition (polar residues). Basic and acidic residues-rich tracts occupy residues 526–538 (QSPE…RFAD) and 546–557 (PGDHQAREEDLP). The segment covering 607–619 (SVTPSEKSLPRNS) has biased composition (polar residues). Residues 688–705 (NSPNKSSSSSKARPSAAP) are compositionally biased toward low complexity.

In terms of assembly, interacts with tax-6. Expressed in intestine.

The protein is Calcineurin-interacting protein 2 of Caenorhabditis elegans.